The primary structure comprises 366 residues: Apolipoprotein A-V (366 aa).

An N-terminal signal peptide occupies residues 1 to 23 (MASMAAVLTWALALLSAFSATQA). Coiled-coil stretches lie at residues 54 to 157 (ATLK…VGED) and 236 to 262 (TLKA…RAFA). At threonine 55 the chain carries Phosphothreonine; by FAM20C. At serine 59 the chain carries Phosphoserine.

Belongs to the apolipoprotein A1/A4/E family. In terms of assembly, interacts with GPIHBP1. Interacts with SORL1; this interaction leads to APOA5 internalization and sorting either to lysosomes and degradation, or to the trans-Golgi network. In terms of processing, phosphorylated by FAM20C in the extracellular medium. In terms of tissue distribution, liver and plasma.

The protein resides in the secreted. It is found in the early endosome. It localises to the late endosome. Its subcellular location is the golgi apparatus. The protein localises to the trans-Golgi network. In terms of biological role, minor apolipoprotein mainly associated with HDL and to a lesser extent with VLDL. May also be associated with chylomicrons. Important determinant of plasma triglyceride (TG) levels by both being a potent stimulator of apo-CII lipoprotein lipase (LPL) TG hydrolysis and an inhibitor of the hepatic VLDL-TG production rate (without affecting the VLDL-apoB production rate). Activates poorly lecithin:cholesterol acyltransferase (LCAT) and does not enhance efflux of cholesterol from macrophages. Binds heparin. The sequence is that of Apolipoprotein A-V (APOA5) from Homo sapiens (Human).